We begin with the raw amino-acid sequence, 346 residues long: (R,R)-butanediol dehydrogenase (346 aa).

Residues Cys37, His70, and Glu152 each coordinate Zn(2+).

The protein belongs to the zinc-containing alcohol dehydrogenase family. As to quaternary structure, homotetramer. Interacts with BrxC. It depends on Zn(2+) as a cofactor.

It localises to the cytoplasm. Its subcellular location is the secreted. It catalyses the reaction (R,R)-butane-2,3-diol + NAD(+) = (R)-acetoin + NADH + H(+). In Bacillus subtilis (strain 168), this protein is (R,R)-butanediol dehydrogenase.